The primary structure comprises 54 residues: Large ribosomal subunit protein bL33 (54 aa).

The protein belongs to the bacterial ribosomal protein bL33 family.

This Corynebacterium efficiens (strain DSM 44549 / YS-314 / AJ 12310 / JCM 11189 / NBRC 100395) protein is Large ribosomal subunit protein bL33.